We begin with the raw amino-acid sequence, 440 residues long: D-serine dehydratase (440 aa).

Lys-116 is modified (N6-(pyridoxal phosphate)lysine).

This sequence belongs to the serine/threonine dehydratase family. DsdA subfamily. Monomer. Requires pyridoxal 5'-phosphate as cofactor.

The enzyme catalyses D-serine = pyruvate + NH4(+). The sequence is that of D-serine dehydratase from Salmonella typhi.